The sequence spans 319 residues: Multivesicular body subunit 12B (319 aa).

Residues 1–50 (MRSCFCVRRSRDPPPPQPPPPPPQRGTDQSTMPEVKDLSEALPETSMDPI) form a disordered region. The span at 13–24 (PPPPQPPPPPPQ) shows a compositional bias: pro residues. 2 positions are modified to phosphoserine: S46 and S101. An MABP domain is found at 47-193 (MDPITGVGVV…SMGIWYRMGR (147 aa)). Phosphothreonine is present on residues T122, T204, and T205. The segment at 195-222 (PRNHDSSQPTTPSQSSAASTPAPNLPRH) is disordered. The segment covering 200–216 (SSQPTTPSQSSAASTPA) has biased composition (low complexity). At S224 the chain carries Phosphoserine. The UMA domain occupies 254–303 (MDGVPFMISEKFSCVPESMQPFDLLGITIKSLAEIEKEYEYSFRTEQSAA). Positions 299 to 319 (EQSAAARLPPSPTRCQQIPQS) are disordered. S309 is modified (phosphoserine).

Belongs to the MVB12 family. As to quaternary structure, component of the ESCRT-I complex (endosomal sorting complex required for transport I) which consists of TSG101, VPS28, a VPS37 protein (VPS37A to -D) and MVB12A or MVB12B in a 1:1:1:1 stoichiometry. Interacts with TSG101; the association appears to be mediated by the TSG101-VPS37 binary subcomplex. Interacts with VPS28. Interacts with VPS37B; the association appears to be mediated by the TSG101-VPS37 binary subcomplex. Interacts with VPS37C; the association appears to be mediated by the TSG101-VPS37 binary subcomplex.

The protein resides in the endosome. It localises to the late endosome membrane. Functionally, component of the ESCRT-I complex, a regulator of vesicular trafficking process. Required for the sorting of endocytic ubiquitinated cargos into multivesicular bodies. This is Multivesicular body subunit 12B (MVB12B) from Homo sapiens (Human).